Here is a 425-residue protein sequence, read N- to C-terminus: Serine--tRNA ligase (425 aa).

Residue 231-233 coordinates L-serine; it reads TAE. 262-264 lines the ATP pocket; that stretch reads RSE. Position 285 (E285) interacts with L-serine. 349–352 is a binding site for ATP; sequence EISS. S385 is an L-serine binding site.

Belongs to the class-II aminoacyl-tRNA synthetase family. Type-1 seryl-tRNA synthetase subfamily. Homodimer. The tRNA molecule binds across the dimer.

The protein localises to the cytoplasm. The enzyme catalyses tRNA(Ser) + L-serine + ATP = L-seryl-tRNA(Ser) + AMP + diphosphate + H(+). It carries out the reaction tRNA(Sec) + L-serine + ATP = L-seryl-tRNA(Sec) + AMP + diphosphate + H(+). It participates in aminoacyl-tRNA biosynthesis; selenocysteinyl-tRNA(Sec) biosynthesis; L-seryl-tRNA(Sec) from L-serine and tRNA(Sec): step 1/1. Its function is as follows. Catalyzes the attachment of serine to tRNA(Ser). Is also able to aminoacylate tRNA(Sec) with serine, to form the misacylated tRNA L-seryl-tRNA(Sec), which will be further converted into selenocysteinyl-tRNA(Sec). The chain is Serine--tRNA ligase from Desulfosudis oleivorans (strain DSM 6200 / JCM 39069 / Hxd3) (Desulfococcus oleovorans).